Consider the following 117-residue polypeptide: Immunoglobulin heavy variable 1-24 (117 aa).

Residues methionine 1–alanine 19 form the signal peptide. Residues glutamine 20 to serine 44 are framework-1. An Ig-like domain is found at glutamine 20–threonine 117. A disulfide bridge connects residues cysteine 41 and cysteine 115. The interval glycine 45 to serine 52 is complementarity-determining-1. The interval methionine 53–glycine 69 is framework-2. Residues phenylalanine 70–threonine 77 are complementarity-determining-2. The tract at residues isoleucine 78–cysteine 115 is framework-3. The tract at residues alanine 116 to threonine 117 is complementarity-determining-3.

Immunoglobulins are composed of two identical heavy chains and two identical light chains; disulfide-linked.

The protein resides in the secreted. The protein localises to the cell membrane. Functionally, v region of the variable domain of immunoglobulin heavy chains that participates in the antigen recognition. Immunoglobulins, also known as antibodies, are membrane-bound or secreted glycoproteins produced by B lymphocytes. In the recognition phase of humoral immunity, the membrane-bound immunoglobulins serve as receptors which, upon binding of a specific antigen, trigger the clonal expansion and differentiation of B lymphocytes into immunoglobulins-secreting plasma cells. Secreted immunoglobulins mediate the effector phase of humoral immunity, which results in the elimination of bound antigens. The antigen binding site is formed by the variable domain of one heavy chain, together with that of its associated light chain. Thus, each immunoglobulin has two antigen binding sites with remarkable affinity for a particular antigen. The variable domains are assembled by a process called V-(D)-J rearrangement and can then be subjected to somatic hypermutations which, after exposure to antigen and selection, allow affinity maturation for a particular antigen. The polypeptide is Immunoglobulin heavy variable 1-24 (Homo sapiens (Human)).